We begin with the raw amino-acid sequence, 499 residues long: Bifunctional purine biosynthesis protein PurH (499 aa).

One can recognise an MGS-like domain in the interval 1 to 144 (MIKRALISVF…KNFQDVVVLT (144 aa)).

This sequence belongs to the PurH family.

The catalysed reaction is (6R)-10-formyltetrahydrofolate + 5-amino-1-(5-phospho-beta-D-ribosyl)imidazole-4-carboxamide = 5-formamido-1-(5-phospho-D-ribosyl)imidazole-4-carboxamide + (6S)-5,6,7,8-tetrahydrofolate. It catalyses the reaction IMP + H2O = 5-formamido-1-(5-phospho-D-ribosyl)imidazole-4-carboxamide. It functions in the pathway purine metabolism; IMP biosynthesis via de novo pathway; 5-formamido-1-(5-phospho-D-ribosyl)imidazole-4-carboxamide from 5-amino-1-(5-phospho-D-ribosyl)imidazole-4-carboxamide (10-formyl THF route): step 1/1. The protein operates within purine metabolism; IMP biosynthesis via de novo pathway; IMP from 5-formamido-1-(5-phospho-D-ribosyl)imidazole-4-carboxamide: step 1/1. The protein is Bifunctional purine biosynthesis protein PurH of Clostridium acetobutylicum (strain ATCC 824 / DSM 792 / JCM 1419 / IAM 19013 / LMG 5710 / NBRC 13948 / NRRL B-527 / VKM B-1787 / 2291 / W).